We begin with the raw amino-acid sequence, 414 residues long: Imidazolonepropionase (414 aa).

2 residues coordinate Fe(3+): His77 and His79. Residues His77 and His79 each coordinate Zn(2+). 3 residues coordinate 4-imidazolone-5-propanoate: Arg86, Tyr149, and His184. An N-formimidoyl-L-glutamate-binding site is contributed by Tyr149. A Fe(3+)-binding site is contributed by His249. His249 lines the Zn(2+) pocket. Glu252 contacts 4-imidazolone-5-propanoate. Asp323 is a Fe(3+) binding site. Asp323 contributes to the Zn(2+) binding site. Residues Asn325 and Gly327 each contribute to the N-formimidoyl-L-glutamate site. Residue Ser328 participates in 4-imidazolone-5-propanoate binding.

It belongs to the metallo-dependent hydrolases superfamily. HutI family. It depends on Zn(2+) as a cofactor. Fe(3+) is required as a cofactor.

Its subcellular location is the cytoplasm. It catalyses the reaction 4-imidazolone-5-propanoate + H2O = N-formimidoyl-L-glutamate. The protein operates within amino-acid degradation; L-histidine degradation into L-glutamate; N-formimidoyl-L-glutamate from L-histidine: step 3/3. Catalyzes the hydrolytic cleavage of the carbon-nitrogen bond in imidazolone-5-propanoate to yield N-formimidoyl-L-glutamate. It is the third step in the universal histidine degradation pathway. This chain is Imidazolonepropionase, found in Phocaeicola vulgatus (strain ATCC 8482 / DSM 1447 / JCM 5826 / CCUG 4940 / NBRC 14291 / NCTC 11154) (Bacteroides vulgatus).